We begin with the raw amino-acid sequence, 142 residues long: MSESLVVCDVAEDLVEKLRKFRFRKETHNAAIIMKIDKDERLVVLDEELEGVSPDELKDELPERQPRFIVYSYKYQHDDGRVSYPLCFIFSSPVGCKPEQQMMYAGSKNKLVQTAELTKVFEIRNTEDLTEEWLREKLGFFH.

Serine 2 carries the N-acetylserine modification. One can recognise an ADF-H domain in the interval 4-139; it reads SLVVCDVAED…TEEWLREKLG (136 aa).

This sequence belongs to the actin-binding proteins ADF family. GMF subfamily. Phosphorylated; stimulated by phorbol ester.

Its function is as follows. This protein causes differentiation of brain cells, stimulation of neural regeneration, and inhibition of proliferation of tumor cells. The chain is Glia maturation factor beta (Gmfb) from Mus musculus (Mouse).